The chain runs to 99 residues: Protein Frey (99 aa).

The helical transmembrane segment at 7–29 (GALYPRAGLSLFLLYLVLAAVLL) threads the bilayer. Positions 65-88 (PKHPWPRGPRPLLSRAQQRKRDGP) are disordered.

As to quaternary structure, interacts with SPPL2C (via active sites); the interaction stabilizes FREY1 protein and inhibits SPPL2C proteolytic activity. Interacts with IZUMO1; the interaction retains IZUMO1 at the endoplasmic reticulum membrane and coordinates IZUMO1 complex assembly.

It localises to the endoplasmic reticulum membrane. Functionally, key regulator for male fertility expressed transiently in round spermatids where it recruits IZUMO1 at the endoplasmic reticulum (ER) membrane and coordinates the oolemmal binding multimeric complex (IZUMO1 complex) assembly. Upon complete assembly of the IZUMO1 complex, its ER retention is released, facilitating IZUMO1 complex export to the acrosome. Through the interaction with SPPL2C, inhibits its intramembrane protease activity directly accessing the catalytic center of an I-CLiP. This is Protein Frey from Ailuropoda melanoleuca (Giant panda).